The following is a 196-amino-acid chain: Rac-like GTP-binding protein ARAC5 (196 aa).

16–21 (AVGKTC) is a binding site for GTP. The Effector region motif lies at 35–43 (YVPTVFDNF). GTP contacts are provided by residues 119-121 (KLD) and 159-161 (SSK). C193 bears the Cysteine methyl ester mark. The S-geranylgeranyl cysteine moiety is linked to residue C193. Positions 194-196 (VFL) are cleaved as a propeptide — removed in mature form.

The protein belongs to the small GTPase superfamily. Rho family. Interacts with GDI1 and ROPGEF8 homodimer. Binds to SPK1. Ubiquitous. Preferentially expressed at the tip of root hairs.

Its subcellular location is the cytoplasm. It is found in the membrane. It localises to the cell membrane. Involved in cell polarity control during the actin-dependent tip growth of root hairs, thus regulating root hair length and root hair initiation. Its function is as follows. Inactive GDP-bound Rho GTPases reside in the cytosol, are found in a complex with Rho GDP-dissociation inhibitors (Rho GDIs), and are released from the GDI protein in order to translocate to membranes upon activation. The polypeptide is Rac-like GTP-binding protein ARAC5 (Arabidopsis thaliana (Mouse-ear cress)).